The chain runs to 362 residues: Leucoanthocyanidin dioxygenase (362 aa).

The Fe2OG dioxygenase domain maps to 211 to 313 (MEELLLQKKI…RISWAVFCEP (103 aa)). The Fe cation site is built by His238, Asp240, and His294.

This sequence belongs to the iron/ascorbate-dependent oxidoreductase family. Fe cation serves as cofactor. It depends on L-ascorbate as a cofactor.

The catalysed reaction is a (2R,3S,4S)-leucoanthocyanidin + 2-oxoglutarate + O2 = a 4-H-anthocyanidin with a 3-hydroxy group + succinate + CO2 + 2 H2O. The protein operates within pigment biosynthesis; anthocyanin biosynthesis. Functionally, oxidation of leucoanthocyanidins into anthocyanidins. The sequence is that of Leucoanthocyanidin dioxygenase from Vitis vinifera (Grape).